Reading from the N-terminus, the 436-residue chain is MQVSVETTQGLERRLTITVPADKIEKEYNSRLNQVAKTRRIDGFRPGKAPKALIQKMYGESIVADVADAVMQRHFVEALVAEKLNPVGAPTLEPNQLVPGSDFTFTVSFEVYPEFKVQNLDAIKVEKPVATVSDADLDKMLTTLRKQHASWVDADEAAANDLRVNMDFVGSVDGEEFEGGKAEGFALVLGAGRMIPGFEAGILGKKAGESFDIEVTFPEDYHAENLKGKAAKFAIKLNKVEKQDLPELDAEFIKRFGVEDGSVESLKAEIRKNMERELTQALKGQVKEQILSGLLEQNLIDVPKAAVTREVEALRQQALQRFGAANSKNVPQLPDELFQEQAERRVRVGLLLGEVIREQDIKADDARVKTLIESLATAYEDPSEVVDYYFQNERLLNNMRDLAVEDQAIEFLLSQAQVTEKATSFDEVINKAGAAA.

The 86-residue stretch at 161-246 (DLRVNMDFVG…LNKVEKQDLP (86 aa)) folds into the PPIase FKBP-type domain.

Belongs to the FKBP-type PPIase family. Tig subfamily.

The protein resides in the cytoplasm. It carries out the reaction [protein]-peptidylproline (omega=180) = [protein]-peptidylproline (omega=0). In terms of biological role, involved in protein export. Acts as a chaperone by maintaining the newly synthesized protein in an open conformation. Functions as a peptidyl-prolyl cis-trans isomerase. In Tolumonas auensis (strain DSM 9187 / NBRC 110442 / TA 4), this protein is Trigger factor.